We begin with the raw amino-acid sequence, 554 residues long: Hydroxylamine reductase (554 aa).

Residues cysteine 3, cysteine 6, cysteine 18, and cysteine 25 each coordinate [2Fe-2S] cluster. Hybrid [4Fe-2O-2S] cluster is bound by residues histidine 252, glutamate 276, cysteine 320, cysteine 408, cysteine 436, cysteine 461, glutamate 495, and lysine 497. Cysteine 408 carries the cysteine persulfide modification.

It belongs to the HCP family. The cofactor is [2Fe-2S] cluster. Hybrid [4Fe-2O-2S] cluster is required as a cofactor.

The protein localises to the cytoplasm. It carries out the reaction A + NH4(+) + H2O = hydroxylamine + AH2 + H(+). Its function is as follows. Catalyzes the reduction of hydroxylamine to form NH(3) and H(2)O. In Shewanella amazonensis (strain ATCC BAA-1098 / SB2B), this protein is Hydroxylamine reductase.